Consider the following 230-residue polypeptide: Flagellar L-ring protein (230 aa).

Positions 1 to 15 are cleaved as a signal peptide; it reads MSRLPSLSSLCLAIA. The N-palmitoyl cysteine moiety is linked to residue Cys16. Residue Cys16 is the site of S-diacylglycerol cysteine attachment.

The protein belongs to the FlgH family. In terms of assembly, the basal body constitutes a major portion of the flagellar organelle and consists of four rings (L,P,S, and M) mounted on a central rod.

Its subcellular location is the cell outer membrane. The protein resides in the bacterial flagellum basal body. Functionally, assembles around the rod to form the L-ring and probably protects the motor/basal body from shearing forces during rotation. This chain is Flagellar L-ring protein, found in Xanthomonas campestris pv. campestris (strain 8004).